A 295-amino-acid chain; its full sequence is Sulfotransferase 1A1 (295 aa).

48–53 (KSGTTW) lines the 3'-phosphoadenylyl sulfate pocket. 106 to 108 (KTH) provides a ligand contact to substrate. The Proton acceptor role is filled by His108. 3'-phosphoadenylyl sulfate contacts are provided by residues Arg130, Ser138, Tyr193, 227–232 (TSFKEM), and 255–259 (FMRKG). Ser138 is modified (phosphoserine).

It belongs to the sulfotransferase 1 family. Homodimer.

The protein localises to the cytoplasm. It catalyses the reaction a phenol + 3'-phosphoadenylyl sulfate = an aryl sulfate + adenosine 3',5'-bisphosphate + H(+). The catalysed reaction is 17beta-estradiol + 3'-phosphoadenylyl sulfate = 17beta-estradiol 3-sulfate + adenosine 3',5'-bisphosphate + H(+). The enzyme catalyses 4-ethylphenol + 3'-phosphoadenylyl sulfate = 4-ethylphenyl sulfate + adenosine 3',5'-bisphosphate + H(+). It carries out the reaction 4-nitrophenol + 3'-phosphoadenylyl sulfate = 4-nitrophenyl sulfate + adenosine 3',5'-bisphosphate. It catalyses the reaction dopamine + 3'-phosphoadenylyl sulfate = dopamine 3-O-sulfate + adenosine 3',5'-bisphosphate + H(+). The catalysed reaction is dopamine + 3'-phosphoadenylyl sulfate = dopamine 4-O-sulfate + adenosine 3',5'-bisphosphate + H(+). The enzyme catalyses 3,3',5-triiodo-L-thyronine + 3'-phosphoadenylyl sulfate = 3,3',5-triiodo-L-thyronine sulfate + adenosine 3',5'-bisphosphate + H(+). It carries out the reaction 3,3',5'-triiodo-L-thyronine + 3'-phosphoadenylyl sulfate = 3,3',5'-triiodo-L-thyronine sulfate + adenosine 3',5'-bisphosphate + H(+). It catalyses the reaction 3,3'-diiodo-L-thyronine + 3'-phosphoadenylyl sulfate = 3,3'-diiodo-L-thyronine sulfate + adenosine 3',5'-bisphosphate + H(+). The catalysed reaction is L-thyroxine + 3'-phosphoadenylyl sulfate = L-thyroxine sulfate + adenosine 3',5'-bisphosphate + H(+). Its function is as follows. Sulfotransferase that utilizes 3'-phospho-5'-adenylyl sulfate (PAPS) as sulfonate donor to catalyze the sulfate conjugation of a wide variety of acceptor molecules bearing a hydroxyl or an amine group. Sulfonation increases the water solubility of most compounds, and therefore their renal excretion, but it can also result in bioactivation to form active metabolites. Displays broad substrate specificity for small phenolic compounds. Plays an important role in the sulfonation of endogenous molecules such as steroid hormones. Mediates also the metabolic activation of carcinogenic N-hydroxyarylamines leading to highly reactive intermediates capable of forming DNA adducts, potentially resulting in mutagenesis. May play a role in gut microbiota-host metabolic interaction. O-sulfonates 4-ethylphenol (4-EP), a dietary tyrosine-derived metabolite produced by gut bacteria. The product 4-EPS crosses the blood-brain barrier and may negatively regulate oligodendrocyte maturation and myelination, affecting the functional connectivity of different brain regions associated with the limbic system. Catalyzes the sulfate conjugation of dopamine. Catalyzes the sulfation of T4 (L-thyroxine/3,5,3',5'-tetraiodothyronine), T3 (3,5,3'-triiodothyronine), rT3 (3,3',5'-triiodothyronine) and 3,3'-T2 (3,3'-diiodothyronine), with a substrate preference of 3,3'-T2 &gt; rT3 &gt; T3 &gt; T4. In Macaca fascicularis (Crab-eating macaque), this protein is Sulfotransferase 1A1 (SULT1A1).